The primary structure comprises 301 residues: Acetyl-coenzyme A carboxylase carboxyl transferase subunit beta (301 aa).

In terms of domain architecture, CoA carboxyltransferase N-terminal spans 25 to 294 (LWIKCPETGE…SAANDMNGGA (270 aa)).

Belongs to the AccD/PCCB family. Acetyl-CoA carboxylase is a heterohexamer composed of biotin carboxyl carrier protein (AccB), biotin carboxylase (AccC) and two subunits each of ACCase subunit alpha (AccA) and ACCase subunit beta (AccD).

It is found in the cytoplasm. It carries out the reaction N(6)-carboxybiotinyl-L-lysyl-[protein] + acetyl-CoA = N(6)-biotinyl-L-lysyl-[protein] + malonyl-CoA. It functions in the pathway lipid metabolism; malonyl-CoA biosynthesis; malonyl-CoA from acetyl-CoA: step 1/1. In terms of biological role, component of the acetyl coenzyme A carboxylase (ACC) complex. Biotin carboxylase (BC) catalyzes the carboxylation of biotin on its carrier protein (BCCP) and then the CO(2) group is transferred by the transcarboxylase to acetyl-CoA to form malonyl-CoA. The protein is Acetyl-coenzyme A carboxylase carboxyl transferase subunit beta of Rhizobium etli (strain CIAT 652).